The sequence spans 204 residues: Rho GDP-dissociation inhibitor 1 (204 aa).

The disordered stretch occupies residues 1–36 (MAEQEPTAEQLAQIAAENEEDEHSVNYKPPAQKSIQ). At Ala2 the chain carries N-acetylalanine. Ser34 carries the phosphoserine modification. Lys43 carries the post-translational modification N6-acetyllysine. Ser47 is modified (phosphoserine). 2 positions are modified to N6-acetyllysine: Lys105 and Lys127. Residues Lys138 and Lys141 each participate in a glycyl lysine isopeptide (Lys-Gly) (interchain with G-Cter in SUMO1); alternate cross-link. Residues Lys138 and Lys141 each participate in a glycyl lysine isopeptide (Lys-Gly) (interchain with G-Cter in SUMO2); alternate cross-link. Lys141 carries the N6-acetyllysine; alternate modification. At Lys141 the chain carries N6-succinyllysine; alternate. An N6-acetyllysine modification is found at Lys178.

This sequence belongs to the Rho GDI family. In terms of assembly, monomer. Interacts with FER. Interacts with PLXNB3. Forms a heterodimer with RAC1. Interacts with RHOA, the affinity is increased by three orders of magnitude when RHOA is prenylated. Interacts with PSMD10; the interaction increases ARHGDIA association with RHOA, leading to ARHGDIA-mediated inactivation of RHOA and ROCK and prolonged AKT activation. Interacts with KANK2; the interaction is direct and may regulate the interaction of ARHGDIA with RHOA, RAC1 and CDC42. Interacts with RHOC. Interacts with CDC42. Interacts with NGFR (via death domain); NGFR binding decreases the affinity for RHOA. In kidney glomerulus, expressed in podocytes and mesangial cells.

Its subcellular location is the cytoplasm. In terms of biological role, controls Rho proteins homeostasis. Regulates the GDP/GTP exchange reaction of the Rho proteins by inhibiting the dissociation of GDP from them, and the subsequent binding of GTP to them. Retains Rho proteins such as CDC42, RAC1 and RHOA in an inactive cytosolic pool, regulating their stability and protecting them from degradation. Actively involved in the recycling and distribution of activated Rho GTPases in the cell, mediates extraction from membranes of both inactive and activated molecules due its exceptionally high affinity for prenylated forms. Through the modulation of Rho proteins, may play a role in cell motility regulation. In glioma cells, inhibits cell migration and invasion by mediating the signals of SEMA5A and PLXNB3 that lead to inactivation of RAC1. This is Rho GDP-dissociation inhibitor 1 (Arhgdia) from Mus musculus (Mouse).